The chain runs to 212 residues: Guanylate kinase (212 aa).

One can recognise a Guanylate kinase-like domain in the interval 14 to 192 (GTALVICAPS…AYDELRATYL (179 aa)). 21-28 (APSGTGKT) is an ATP binding site.

Belongs to the guanylate kinase family.

The protein resides in the cytoplasm. The catalysed reaction is GMP + ATP = GDP + ADP. Functionally, essential for recycling GMP and indirectly, cGMP. The protein is Guanylate kinase of Lawsonia intracellularis (strain PHE/MN1-00).